The chain runs to 377 residues: N-acetyldiaminopimelate deacetylase (377 aa).

D70 is an active-site residue. E129 serves as the catalytic Proton acceptor.

This sequence belongs to the peptidase M20A family. N-acetyldiaminopimelate deacetylase subfamily.

It catalyses the reaction N-acetyl-(2S,6S)-2,6-diaminopimelate + H2O = (2S,6S)-2,6-diaminopimelate + acetate. It functions in the pathway amino-acid biosynthesis; L-lysine biosynthesis via DAP pathway; LL-2,6-diaminopimelate from (S)-tetrahydrodipicolinate (acetylase route): step 3/3. Catalyzes the conversion of N-acetyl-diaminopimelate to diaminopimelate and acetate. The chain is N-acetyldiaminopimelate deacetylase from Streptococcus thermophilus (strain ATCC BAA-491 / LMD-9).